We begin with the raw amino-acid sequence, 503 residues long: Probable cytosol aminopeptidase (503 aa).

Lysine 270 and aspartate 275 together coordinate Mn(2+). Lysine 282 is a catalytic residue. Aspartate 293, aspartate 352, and glutamate 354 together coordinate Mn(2+). Arginine 356 is a catalytic residue.

This sequence belongs to the peptidase M17 family. It depends on Mn(2+) as a cofactor.

It is found in the cytoplasm. The enzyme catalyses Release of an N-terminal amino acid, Xaa-|-Yaa-, in which Xaa is preferably Leu, but may be other amino acids including Pro although not Arg or Lys, and Yaa may be Pro. Amino acid amides and methyl esters are also readily hydrolyzed, but rates on arylamides are exceedingly low.. The catalysed reaction is Release of an N-terminal amino acid, preferentially leucine, but not glutamic or aspartic acids.. Functionally, presumably involved in the processing and regular turnover of intracellular proteins. Catalyzes the removal of unsubstituted N-terminal amino acids from various peptides. This is Probable cytosol aminopeptidase from Shigella dysenteriae serotype 1 (strain Sd197).